The chain runs to 332 residues: Ferredoxin--NADP reductase (332 aa).

Thr-20, Glu-39, Gln-47, Tyr-52, Val-92, Phe-126, Asp-288, and Thr-329 together coordinate FAD.

The protein belongs to the ferredoxin--NADP reductase type 2 family. As to quaternary structure, homodimer. FAD is required as a cofactor.

It catalyses the reaction 2 reduced [2Fe-2S]-[ferredoxin] + NADP(+) + H(+) = 2 oxidized [2Fe-2S]-[ferredoxin] + NADPH. The protein is Ferredoxin--NADP reductase of Geobacillus kaustophilus (strain HTA426).